A 450-amino-acid chain; its full sequence is Transcription factor SCREAM2 (450 aa).

3 disordered regions span residues 1–47 (MNSD…NQND), 207–231 (RQSS…YERE), and 244–265 (GLNY…KGMP). Over residues 209 to 220 (SSSSKMCNSESS) the composition is skewed to low complexity. Over residues 221–230 (SEMRKSSYER) the composition is skewed to basic and acidic residues. One can recognise a bHLH domain in the interval 263–312 (GMPAKNLMAERRRRKKLNDRLYMLRSVVPKISKMDRASILGDAIDYLKEL). The 73-residue stretch at 378-450 (NIHMFCGRRP…LDTAGYAGLV (73 aa)) folds into the ACT domain.

In terms of assembly, homodimer. Heterodimers with SPCH, MUTE, and FAMA. As to expression, expressed constitutively in roots, leaves, stems, and flowers. Broad expression within stomatal cell lineages of leaf epidermis, except in mature guard-cells.

The protein resides in the nucleus. Its function is as follows. Mediates stomatal differentiation in the epidermis probably by controlling successive roles of SPCH, MUTE, and FAMA. Functions as a dimer with SPCH during stomatal initiation. The sequence is that of Transcription factor SCREAM2 (SCRM2) from Arabidopsis thaliana (Mouse-ear cress).